Consider the following 286-residue polypeptide: Shikimate dehydrogenase (NADP(+)) (286 aa).

Residues 19–21 (SLS) and Thr-66 each bind shikimate. Lys-70 functions as the Proton acceptor in the catalytic mechanism. Shikimate-binding residues include Asn-91 and Asp-107. Residues 129–133 (GSGGA) and Leu-229 contribute to the NADP(+) site. Tyr-231 provides a ligand contact to shikimate. Position 252 (Gly-252) interacts with NADP(+).

It belongs to the shikimate dehydrogenase family. As to quaternary structure, homodimer.

It carries out the reaction shikimate + NADP(+) = 3-dehydroshikimate + NADPH + H(+). The protein operates within metabolic intermediate biosynthesis; chorismate biosynthesis; chorismate from D-erythrose 4-phosphate and phosphoenolpyruvate: step 4/7. Its function is as follows. Involved in the biosynthesis of the chorismate, which leads to the biosynthesis of aromatic amino acids. Catalyzes the reversible NADPH linked reduction of 3-dehydroshikimate (DHSA) to yield shikimate (SA). The sequence is that of Shikimate dehydrogenase (NADP(+)) from Prochlorococcus marinus (strain MIT 9312).